The following is a 346-amino-acid chain: Phosphoribosylformylglycinamidine cyclo-ligase (346 aa).

It belongs to the AIR synthase family.

It localises to the cytoplasm. It carries out the reaction 2-formamido-N(1)-(5-O-phospho-beta-D-ribosyl)acetamidine + ATP = 5-amino-1-(5-phospho-beta-D-ribosyl)imidazole + ADP + phosphate + H(+). The protein operates within purine metabolism; IMP biosynthesis via de novo pathway; 5-amino-1-(5-phospho-D-ribosyl)imidazole from N(2)-formyl-N(1)-(5-phospho-D-ribosyl)glycinamide: step 2/2. In Bacillus anthracis (strain A0248), this protein is Phosphoribosylformylglycinamidine cyclo-ligase.